Reading from the N-terminus, the 250-residue chain is Intermembrane phospholipid transport system lipoprotein MlaA (250 aa).

Residues 1–18 (MKTKTILTALLSAIALTG) form the signal peptide. Cys19 is lipidated: N-palmitoyl cysteine. Cys19 carries S-diacylglycerol cysteine lipidation.

Belongs to the MlaA family.

It is found in the cell outer membrane. Functionally, involved in a phospholipid transport pathway that maintains lipid asymmetry in the outer membrane by retrograde trafficking of phospholipids from the outer membrane to the inner membrane. This chain is Intermembrane phospholipid transport system lipoprotein MlaA, found in Haemophilus influenzae (strain ATCC 51907 / DSM 11121 / KW20 / Rd).